Here is a 498-residue protein sequence, read N- to C-terminus: ATP synthase subunit beta, chloroplastic (498 aa).

172-179 (GGAGVGKT) serves as a coordination point for ATP.

Belongs to the ATPase alpha/beta chains family. In terms of assembly, F-type ATPases have 2 components, CF(1) - the catalytic core - and CF(0) - the membrane proton channel. CF(1) has five subunits: alpha(3), beta(3), gamma(1), delta(1), epsilon(1). CF(0) has four main subunits: a(1), b(1), b'(1) and c(9-12).

The protein resides in the plastid. Its subcellular location is the chloroplast thylakoid membrane. The enzyme catalyses ATP + H2O + 4 H(+)(in) = ADP + phosphate + 5 H(+)(out). Functionally, produces ATP from ADP in the presence of a proton gradient across the membrane. The catalytic sites are hosted primarily by the beta subunits. The protein is ATP synthase subunit beta, chloroplastic of Calycanthus floridus (Eastern sweetshrub).